The sequence spans 354 residues: Probable alcohol acetyltransferase (354 aa).

Residues S124 and H293 each act as charge relay system in the active site.

The protein belongs to the AB hydrolase superfamily.

Functionally, probable alcohol acetyltransferase that uses acetyl-CoA to synthesize acetate esters from various alcohols. Not involved in the synthesis of ethyl acetate. This is Probable alcohol acetyltransferase (EAT2) from Cyberlindnera jadinii (strain ATCC 18201 / CBS 1600 / BCRC 20928 / JCM 3617 / NBRC 0987 / NRRL Y-1542) (Torula yeast).